Reading from the N-terminus, the 152-residue chain is Transcriptional regulator MraZ (152 aa).

SpoVT-AbrB domains lie at 5–52 (ATLV…PLPE) and 81–124 (ASEC…DETT).

This sequence belongs to the MraZ family. Forms oligomers.

It is found in the cytoplasm. The protein localises to the nucleoid. Negatively regulates its own expression and that of the subsequent genes in the proximal part of the division and cell wall (dcw) gene cluster. Acts by binding directly to DNA. May also regulate the expression of genes outside the dcw cluster. The chain is Transcriptional regulator MraZ from Escherichia coli O127:H6 (strain E2348/69 / EPEC).